We begin with the raw amino-acid sequence, 283 residues long: Bifunctional protein FolD (283 aa).

Gly-166–Ser-168 provides a ligand contact to NADP(+).

It belongs to the tetrahydrofolate dehydrogenase/cyclohydrolase family. In terms of assembly, homodimer.

It catalyses the reaction (6R)-5,10-methylene-5,6,7,8-tetrahydrofolate + NADP(+) = (6R)-5,10-methenyltetrahydrofolate + NADPH. The catalysed reaction is (6R)-5,10-methenyltetrahydrofolate + H2O = (6R)-10-formyltetrahydrofolate + H(+). The protein operates within one-carbon metabolism; tetrahydrofolate interconversion. In terms of biological role, catalyzes the oxidation of 5,10-methylenetetrahydrofolate to 5,10-methenyltetrahydrofolate and then the hydrolysis of 5,10-methenyltetrahydrofolate to 10-formyltetrahydrofolate. This is Bifunctional protein FolD from Coxiella burnetii (strain Dugway 5J108-111).